A 1442-amino-acid polypeptide reads, in one-letter code: Trafficking protein particle complex subunit 10 (1442 aa).

Residues 1-23 (MSNVSPNSMNLNGSTSSTASVND) show a composition bias toward polar residues. 6 disordered regions span residues 1–86 (MSNV…SSSS), 251–277 (TSSG…TSTK), 535–564 (GSSS…NSGI), 1208–1238 (LSSS…NHSK), 1316–1335 (QQQQ…QKQQ), and 1422–1442 (LQDN…TNKT). The segment covering 39-86 (SSSSASSISNSNSSSSNNLKPSTQPLSSSSTLNTPTQFSLQHSSSSSS) has biased composition (low complexity). Residues 535-553 (GSSSSNTPSSTSATTAANG) show a composition bias toward low complexity. The segment covering 554–564 (KNTPMPSNSGI) has biased composition (polar residues). The span at 1208–1236 (LSSSTSPSSATDSSNSNGNNNNNNNNNNH) shows a compositional bias: low complexity. The segment covering 1425-1442 (NNNNNNNSINSQTSTNKT) has biased composition (low complexity).

It belongs to the TMEM1 family. As to quaternary structure, part of the multisubunit TRAPP (transport protein particle) complex.

Its subcellular location is the golgi apparatus. The protein resides in the cis-Golgi network. Functionally, may play a role in vesicular transport from endoplasmic reticulum to Golgi. The protein is Trafficking protein particle complex subunit 10 (trapcc10-1) of Dictyostelium discoideum (Social amoeba).